Reading from the N-terminus, the 307-residue chain is MEFVFLGTGAGVPSKGRNVSAIALQLLEERGQTWLFDCGEATQHQILHTSVRPRRIEKIFITHLHGDHIFGLPGLLGSRSFQGGTTPLTVYGPKGIKQFIEVALSVSTTHVKYPLEIVEITEEGTVFEDNEFHVETKRLSHGIECFGYRIIEKDIQGALLVDKLLEIGVKPGPLFKRLKDGEVVELENGTILNGNDFIGPPQKGRVITILGDTRYCEASRELAQDADVLVHEATFAAEDEQQAYDYFHSTSKQAASIALQANAKRLILTHISSRYQGDTYKELLKEARELFSNTEIATDLKSFPVDR.

Positions 63, 65, 67, 68, 141, 212, and 270 each coordinate Zn(2+). The Proton acceptor role is filled by Asp-67.

The protein belongs to the RNase Z family. As to quaternary structure, homodimer. Zn(2+) is required as a cofactor.

It carries out the reaction Endonucleolytic cleavage of RNA, removing extra 3' nucleotides from tRNA precursor, generating 3' termini of tRNAs. A 3'-hydroxy group is left at the tRNA terminus and a 5'-phosphoryl group is left at the trailer molecule.. Zinc phosphodiesterase, which displays some tRNA 3'-processing endonuclease activity. Probably involved in tRNA maturation, by removing a 3'-trailer from precursor tRNA. This Bacillus anthracis (strain A0248) protein is Ribonuclease Z.